A 47-amino-acid chain; its full sequence is Sperm protamine P1 (47 aa).

It belongs to the protamine P1 family. In terms of tissue distribution, testis.

The protein localises to the nucleus. It localises to the chromosome. Protamines substitute for histones in the chromatin of sperm during the haploid phase of spermatogenesis. They compact sperm DNA into a highly condensed, stable and inactive complex. The protein is Sperm protamine P1 (PRM1) of Orcinus orca (Killer whale).